A 126-amino-acid chain; its full sequence is Glycine cleavage system H protein (126 aa).

The 83-residue stretch at 23–105 folds into the Lipoyl-binding domain; the sequence is AATVGITDHA…YGEGWLLRVR (83 aa). Lysine 64 carries the N6-lipoyllysine modification.

It belongs to the GcvH family. In terms of assembly, the glycine cleavage system is composed of four proteins: P, T, L and H. The cofactor is (R)-lipoate.

The glycine cleavage system catalyzes the degradation of glycine. The H protein shuttles the methylamine group of glycine from the P protein to the T protein. The sequence is that of Glycine cleavage system H protein from Rubrobacter xylanophilus (strain DSM 9941 / JCM 11954 / NBRC 16129 / PRD-1).